We begin with the raw amino-acid sequence, 647 residues long: Methyl-accepting chemotaxis protein McpK (647 aa).

Over 1-16 the chain is Cytoplasmic; that stretch reads MYDWWVLQLAKLSVSR. A helical membrane pass occupies residues 17-37; it reads KLMVGFGVLLALLLLVVISSN. Over 38–291 the chain is Periplasmic; that stretch reads RTLTHQTALS…LRESTASRDR (254 aa). The 243-residue stretch at 45-287 folds into the HBM domain; that stretch reads ALSEQLAEVA…AGRQLRESTA (243 aa). The helical transmembrane segment at 292-312 threads the bilayer; it reads ASLWLIAALALAFGCVAGWAI. Residues 313–647 are Cytoplasmic-facing; the sequence is NRQIVRPLDE…LQAQVGRFRL (335 aa). Positions 314–370 constitute an HAMP domain; sequence RQIVRPLDEALAQAEAIAAGDLGKRPQNPLTLQRRDELGQLQRVMQRMGDSLRELVG. A Methyl-accepting transducer domain is found at 375 to 611; sequence GVSQLASSAE…EINRSVLSVR (237 aa).

The protein belongs to the methyl-accepting chemotaxis (MCP) protein family. As to quaternary structure, ligand free ligand-binding domain (LBD) is present in a monomer-dimer equilibrium. AlphaKG binding stabilizes the homodimer.

It is found in the cell inner membrane. Chemotactic-signal transducers respond to changes in the concentration of attractants and repellents in the environment, transduce a signal from the outside to the inside of the cell, and facilitate sensory adaptation through the variation of the level of methylation. McpK is a chemoreceptor that specifically binds and mediates chemotaxis to alpha-ketoglutarate (alphaKG). The chain is Methyl-accepting chemotaxis protein McpK from Pseudomonas aeruginosa (strain ATCC 15692 / DSM 22644 / CIP 104116 / JCM 14847 / LMG 12228 / 1C / PRS 101 / PAO1).